We begin with the raw amino-acid sequence, 88 residues long: MANTTSAKKAVRKIARRTAINKTRRSRVRTYVRKVEEAIASGDKGAAEAALKAAQPELMRAATRGVLHKNTAARKVSRLARRVKTLNA.

This sequence belongs to the bacterial ribosomal protein bS20 family.

Its function is as follows. Binds directly to 16S ribosomal RNA. The chain is Small ribosomal subunit protein bS20 from Chelativorans sp. (strain BNC1).